The chain runs to 567 residues: MRFSKFYAPTTKEAPKDASLPSHIFLVRGGFVEQIGSGLYNFLPLGKMMLDKITKVVKEEMDAAGVLEVSFSVVTSGELWKQSGRFNVFGKELLRFKDRKENDFVLSPTNEEAAVALVRGKVTSYKQLPLNIYQINTKFRDEARPRFGLLRGREFTMKDAYSFHANEADMKREFDLMEATYSKIFTRLGLNFRAVEADSGAIGGSGSKEFMVLAKNGEDDILCCDSCKYAANVEAAKRAKKTSDAPAPQADATKFYTPDAKTIKAVAEFFKVDEFYTIKAVIKKAIYEDTQKIVAFFVRGNDELQETKAQNACGALELVDASEDEVAAAGLVAGFCGPVGLSGVDFYIDNELKGQTQMICGANEKDYHFVGVSVSSFNDERFKDLVSVQAGDICPKCGGKLELSKGIEVGHIFQLGYKYSSAMGATFLDENGKARPFLMGCYGIGVSRLIAVMVEASHDDRGCVWKKECTPFECEIVISNLKDEAGVKFATKLYENLRNLGLCVLLDDRNERFGVKMNDFELLGFPYAIIVGKGLENGEVELITRDGLVKEVVKKDEILSVLKEKLC.

It belongs to the class-II aminoacyl-tRNA synthetase family. ProS type 1 subfamily. As to quaternary structure, homodimer.

Its subcellular location is the cytoplasm. The enzyme catalyses tRNA(Pro) + L-proline + ATP = L-prolyl-tRNA(Pro) + AMP + diphosphate. In terms of biological role, catalyzes the attachment of proline to tRNA(Pro) in a two-step reaction: proline is first activated by ATP to form Pro-AMP and then transferred to the acceptor end of tRNA(Pro). As ProRS can inadvertently accommodate and process non-cognate amino acids such as alanine and cysteine, to avoid such errors it has two additional distinct editing activities against alanine. One activity is designated as 'pretransfer' editing and involves the tRNA(Pro)-independent hydrolysis of activated Ala-AMP. The other activity is designated 'posttransfer' editing and involves deacylation of mischarged Ala-tRNA(Pro). The misacylated Cys-tRNA(Pro) is not edited by ProRS. This Campylobacter curvus (strain 525.92) protein is Proline--tRNA ligase.